The sequence spans 448 residues: Methionine aminopeptidase 2-1 (448 aa).

A disordered region spans residues Met1 to Arg83. The span at Glu32–Ala48 shows a compositional bias: acidic residues. Over residues Ala59 to Asp73 the composition is skewed to basic residues. His198 contributes to the substrate binding site. Positions 218, 229, and 298 each coordinate a divalent metal cation. His306 is a substrate binding site. The a divalent metal cation site is built by Glu334 and Glu429.

The protein belongs to the peptidase M24A family. Methionine aminopeptidase eukaryotic type 2 subfamily. It depends on Co(2+) as a cofactor. Requires Zn(2+) as cofactor. Mn(2+) serves as cofactor. The cofactor is Fe(2+).

The protein resides in the cytoplasm. The catalysed reaction is Release of N-terminal amino acids, preferentially methionine, from peptides and arylamides.. In terms of biological role, cotranslationally removes the N-terminal methionine from nascent proteins. The N-terminal methionine is often cleaved when the second residue in the primary sequence is small and uncharged (Met-Ala-, Cys, Gly, Pro, Ser, Thr, or Val). The chain is Methionine aminopeptidase 2-1 from Ajellomyces capsulatus (strain G186AR / H82 / ATCC MYA-2454 / RMSCC 2432) (Darling's disease fungus).